Reading from the N-terminus, the 348-residue chain is Protein RecA (348 aa).

66–73 (GPESSGKT) contributes to the ATP binding site.

It belongs to the RecA family.

The protein resides in the cytoplasm. In terms of biological role, can catalyze the hydrolysis of ATP in the presence of single-stranded DNA, the ATP-dependent uptake of single-stranded DNA by duplex DNA, and the ATP-dependent hybridization of homologous single-stranded DNAs. It interacts with LexA causing its activation and leading to its autocatalytic cleavage. This is Protein RecA from Neisseria meningitidis serogroup A / serotype 4A (strain DSM 15465 / Z2491).